The sequence spans 261 residues: MNIQDAQPSTLREMIKQGKLTGHTSGMAKGYVQANVVILPSKCAYDFLLFCFRNPKTCPLLDVSEKGNKSFTKYGVTADISTEVAAYRIYQYGELIETRANVDDLYTDDMVSFLIGCSFTFEHALLEAGIPIRHLEENHNVPMYVTNIPANPSGQFKGNITVSMRPMTMTQAIKATEITTRFKNVHGTPIHIGNPTEIGITDLALPDFGEPVTINENEVPVFWGCGVTPQSVALDAKPDLMITHAPGHMFITDIPDSQLSD.

The protein belongs to the D-glutamate cyclase family.

This chain is Putative hydro-lyase SSP0308, found in Staphylococcus saprophyticus subsp. saprophyticus (strain ATCC 15305 / DSM 20229 / NCIMB 8711 / NCTC 7292 / S-41).